Here is a 460-residue protein sequence, read N- to C-terminus: Notoamide biosynthesis cluster transcriptional coactivator notR (460 aa).

Residues 74-145 (LQDLARQVEI…EPMPNYVSHT (72 aa)) form the HTH iclR-type domain. Residues 107–126 (IQDLADLAGVPDIQLRRVIR) constitute a DNA-binding region (H-T-H motif). A disordered region spans residues 300–320 (TRDFTPQPESSPRPGSASSRV).

It is found in the nucleus. Its function is as follows. Transcription factor that probably regulates the expression of the gene cluster that mediates the biosynthesis of notoamide, a fungal indole alkaloid that belongs to a family of natural products containing a characteristic bicyclo[2.2.2]diazaoctane core. In Aspergillus sp. (strain MF297-2), this protein is Notoamide biosynthesis cluster transcriptional coactivator notR.